The sequence spans 206 residues: Max dimerization protein 3 (206 aa).

The interval 8–25 (IQVLLQAAEFLERREREA) is interaction with SIN3A and SIN3B. Residues 57–109 (SGRHVHNELEKRRRAQLKRCLEQLRQQMPLGVDHTRYTTLSLLRGARMHIQKL) enclose the bHLH domain.

Efficient DNA binding requires dimerization with another bHLH protein. Binds DNA as a heterodimer with MAX. Interacts with SIN3A AND SIN3B. Interacts with RNF17.

The protein localises to the nucleus. Its function is as follows. Transcriptional repressor. Binds with MAX to form a sequence-specific DNA-binding protein complex which recognizes the core sequence 5'-CAC[GA]TG-3'. Antagonizes MYC transcriptional activity by competing for MAX and suppresses MYC dependent cell transformation. The protein is Max dimerization protein 3 (Mxd3) of Rattus norvegicus (Rat).